The chain runs to 365 residues: MAVMAPRTLLLLLLGALALTQTWAGSHSMRYFSTSVSRPGRGEPRFIAVGYVDDTQFVRFDSDAASQRMEPRAPWIEQEEPEYWDGETRKVKAHSQTDRVNLGTLRGYYNQSEAGSHTIQKMYGCDVGSDGRFLRGYQQDAYDGKDYIALNEDLRSWTAADMAAEITKRKWEAAHFAEQLRAYLEGECVEWLRRYLENGKETLQRTDAPKTHMTHHAVSDHEAILRCWALSFYPAEITLTWQRDGEDQTQDTELVETRPAGDGTFQKWAAVVVPSGQEQRYTCHVQHESLPKPLTLRWEPSSQPTIPIVGIIAGLVLFGAVIAGAVIAAVRWRRKSSDRKGGSYSQAASSDSAQGSDVSLTACKV.

Residues M1 to A24 form the signal peptide. Positions G25 to A114 are alpha-1. Residues G25–I308 are Extracellular-facing. N-linked (GlcNAc...) asparagine glycosylation occurs at N110. The interval G115–T206 is alpha-2. 2 disulfide bridges follow: C125/C188 and C227/C283. The tract at residues D207–W298 is alpha-3. An Ig-like C1-type domain is found at P209 to T295. Residues E299 to I308 form a connecting peptide region. Residues V309–W332 traverse the membrane as a helical segment. Over R333–V365 the chain is Cytoplasmic. The interval D338–V365 is disordered. The segment covering G342–S359 has biased composition (low complexity). A Phosphoserine modification is found at S343. Phosphotyrosine is present on Y344. A phosphoserine mark is found at S345, S349, S350, S352, S356, and S359.

It belongs to the MHC class I family. In terms of assembly, heterodimer of an alpha chain and a beta chain (beta-2-microglobulin).

The protein resides in the membrane. Functionally, involved in the presentation of foreign antigens to the immune system. In Gorilla gorilla gorilla (Western lowland gorilla), this protein is Class I histocompatibility antigen, Gogo-A*0201 alpha chain.